A 152-amino-acid polypeptide reads, in one-letter code: 3-dehydroquinate dehydratase (152 aa).

The active-site Proton acceptor is Tyr26. Positions 77, 83, and 90 each coordinate substrate. The Proton donor role is filled by His103. Substrate-binding positions include 104-105 (LS) and Arg114.

The protein belongs to the type-II 3-dehydroquinase family. In terms of assembly, homododecamer.

It carries out the reaction 3-dehydroquinate = 3-dehydroshikimate + H2O. Its pathway is metabolic intermediate biosynthesis; chorismate biosynthesis; chorismate from D-erythrose 4-phosphate and phosphoenolpyruvate: step 3/7. Catalyzes a trans-dehydration via an enolate intermediate. The sequence is that of 3-dehydroquinate dehydratase from Tolumonas auensis (strain DSM 9187 / NBRC 110442 / TA 4).